The primary structure comprises 474 residues: Cyclin-dependent kinase 18 (474 aa).

A phosphoserine mark is found at Ser14, Ser74, Ser89, Ser98, Ser117, and Ser132. The disordered stretch occupies residues 44–93 (NLQLGPLGRDPPQECSTFSPTDSGEEPGQLSPGVQFQRRQNQRRFSMEDV). In terms of domain architecture, Protein kinase spans 144 to 425 (YVKLDKLGEG…AEAALSHSYF (282 aa)). ATP-binding positions include 150–158 (LGEGTYATV) and Lys173. The active-site Proton acceptor is Asp265. 2 positions are modified to phosphoserine: Ser440 and Ser443.

This sequence belongs to the protein kinase superfamily. CMGC Ser/Thr protein kinase family. CDC2/CDKX subfamily. Isoform 2 expression is limited to several subcortical nuclei of the basal gangli and the spinal cord. Isoform 1 is widely expressed.

The enzyme catalyses L-seryl-[protein] + ATP = O-phospho-L-seryl-[protein] + ADP + H(+). It carries out the reaction L-threonyl-[protein] + ATP = O-phospho-L-threonyl-[protein] + ADP + H(+). Functionally, may play a role in signal transduction cascades in terminally differentiated cells. The polypeptide is Cyclin-dependent kinase 18 (CDK18) (Homo sapiens (Human)).